A 274-amino-acid chain; its full sequence is 2,3,4,5-tetrahydropyridine-2,6-dicarboxylate N-succinyltransferase (274 aa).

The protein belongs to the transferase hexapeptide repeat family.

It is found in the cytoplasm. It carries out the reaction (S)-2,3,4,5-tetrahydrodipicolinate + succinyl-CoA + H2O = (S)-2-succinylamino-6-oxoheptanedioate + CoA. It participates in amino-acid biosynthesis; L-lysine biosynthesis via DAP pathway; LL-2,6-diaminopimelate from (S)-tetrahydrodipicolinate (succinylase route): step 1/3. This Escherichia coli (strain SMS-3-5 / SECEC) protein is 2,3,4,5-tetrahydropyridine-2,6-dicarboxylate N-succinyltransferase.